The following is a 396-amino-acid chain: Phosphoglycerate kinase (396 aa).

Residues 21–23, Arg36, 59–62, Arg119, and Arg156 contribute to the substrate site; these read DFN and HLGK. ATP contacts are provided by residues Lys206, Gly294, Glu325, and 352–355; that span reads GGDS.

This sequence belongs to the phosphoglycerate kinase family. As to quaternary structure, monomer.

It localises to the cytoplasm. It catalyses the reaction (2R)-3-phosphoglycerate + ATP = (2R)-3-phospho-glyceroyl phosphate + ADP. Its pathway is carbohydrate degradation; glycolysis; pyruvate from D-glyceraldehyde 3-phosphate: step 2/5. This is Phosphoglycerate kinase from Staphylococcus aureus (strain USA300).